The chain runs to 201 residues: Putative ferritin heavy polypeptide-like 19 (201 aa).

Residues 1-123 (MAFYFDQDDA…GYLSNLHKMG (123 aa)) enclose the Ferritin-like diiron domain.

Belongs to the ferritin family.

The polypeptide is Putative ferritin heavy polypeptide-like 19 (FTH1P19) (Homo sapiens (Human)).